Reading from the N-terminus, the 105-residue chain is uncharacterized protein (105 aa).

This is an uncharacterized protein from Paracoccus denitrificans.